The following is a 161-amino-acid chain: Nucleotide-binding protein Bcep1808_2648 (161 aa).

This sequence belongs to the YajQ family.

Functionally, nucleotide-binding protein. In Burkholderia vietnamiensis (strain G4 / LMG 22486) (Burkholderia cepacia (strain R1808)), this protein is Nucleotide-binding protein Bcep1808_2648.